The chain runs to 447 residues: Rab GDP dissociation inhibitor alpha (447 aa).

Serine 427 carries the post-translational modification Phosphoserine.

The protein belongs to the Rab GDI family. Interacts with RHOH. Interacts with the non-phosphorylated forms of RAB1A, RAB3A, RAB5A, RAB5B, RAB5C, RAB8A, RAB8B, RAB10, RAB12, RAB35, and RAB43.

It is found in the cytoplasm. Its subcellular location is the golgi apparatus. It localises to the trans-Golgi network. Its function is as follows. Regulates the GDP/GTP exchange reaction of most Rab proteins by inhibiting the dissociation of GDP from them, and the subsequent binding of GTP to them. Promotes the dissociation of GDP-bound Rab proteins from the membrane and inhibits their activation. Promotes the dissociation of RAB1A, RAB3A, RAB5A and RAB10 from membranes. This Canis lupus familiaris (Dog) protein is Rab GDP dissociation inhibitor alpha (GDI1).